The following is a 248-amino-acid chain: 14-3-3 protein gamma-2 (248 aa).

Belongs to the 14-3-3 family. Homodimer, and heterodimer with other family members. In terms of tissue distribution, expressed in brain, gill, heart, intestine, kidney, liver, ovary, skeletal muscle, spleen and testis.

The protein localises to the cytoplasm. Adapter protein implicated in the regulation of a large spectrum of both general and specialized signaling pathways. Binds to a large number of partners, usually by recognition of a phosphoserine or phosphothreonine motif. Binding generally results in the modulation of the activity of the binding partner. This chain is 14-3-3 protein gamma-2, found in Oncorhynchus mykiss (Rainbow trout).